The sequence spans 150 residues: Large-conductance mechanosensitive channel (150 aa).

Helical transmembrane passes span 14–34 (VIDL…VTSL) and 81–101 (GLFI…FIVI).

The protein belongs to the MscL family. In terms of assembly, homopentamer.

The protein resides in the cell membrane. Channel that opens in response to stretch forces in the membrane lipid bilayer. May participate in the regulation of osmotic pressure changes within the cell. This is Large-conductance mechanosensitive channel from Desulfitobacterium hafniense (strain DSM 10664 / DCB-2).